Reading from the N-terminus, the 98-residue chain is Small ribosomal subunit protein uS19 (98 aa).

Residues 77-98 are disordered; the sequence is TRTYRGHAGGKSEKGGSAPRKK.

It belongs to the universal ribosomal protein uS19 family.

Functionally, protein S19 forms a complex with S13 that binds strongly to the 16S ribosomal RNA. The chain is Small ribosomal subunit protein uS19 from Chlorobium phaeobacteroides (strain BS1).